The primary structure comprises 153 residues: MERRQRGFTLLEIMVVIVILGVLASLVVPNLMGNKEKADKQKAVSDIVALESQLDMYKLDNSRYPTTEQGLGALVKKPTTPPEPRNYPQDGYIRRLPQDPWGAEYQLVSPGRHGKIDVFSYGPDGMPDTDDDIGNWNVGNGAHNNGGNGNGNP.

The propeptide at 1–7 is leader sequence; sequence MERRQRG. An N-methylphenylalanine modification is found at phenylalanine 8. A helical transmembrane segment spans residues 8–28; sequence FTLLEIMVVIVILGVLASLVV. 2 disordered regions span residues 68 to 91 and 126 to 153; these read EQGLGALVKKPTTPPEPRNYPQDG and MPDTDDDIGNWNVGNGAHNNGGNGNGNP. The segment covering 134–143 has biased composition (low complexity); that stretch reads GNWNVGNGAH. Gly residues predominate over residues 144 to 153; the sequence is NNGGNGNGNP.

The protein belongs to the GSP G family. In terms of assembly, type II secretion system is composed of four main components: the outer membrane complex, the inner membrane complex, the cytoplasmic secretion ATPase and the periplasm-spanning pseudopilus. Forms homomultimers. Cleaved by the prepilin peptidase. In terms of processing, methylated by prepilin peptidase at the amino group of the N-terminal phenylalanine once the leader sequence is cleaved.

The protein localises to the cell inner membrane. Core component of the type II secretion system required for the energy-dependent secretion of extracellular factors such as proteases and toxins from the periplasm. Pseudopilin (pilin-like) protein that polymerizes to form the pseudopilus. Further polymerization triggers pseudopilus growth. The chain is Type II secretion system core protein G (outG) from Dickeya chrysanthemi (Pectobacterium chrysanthemi).